Consider the following 197-residue polypeptide: Probable GTP-binding protein EngB (197 aa).

The region spanning 25–197 is the EngB-type G domain; that stretch reads SAPEIAFAGR…VRDEFFKFTR (173 aa). Residues 33-40, 60-64, 79-82, 146-149, and 177-179 each bind GTP; these read GRSNVGKS, GCTRQ, DLPG, TKID, and MSI. 2 residues coordinate Mg(2+): S40 and T62.

It belongs to the TRAFAC class TrmE-Era-EngA-EngB-Septin-like GTPase superfamily. EngB GTPase family. It depends on Mg(2+) as a cofactor.

Necessary for normal cell division and for the maintenance of normal septation. In Wolbachia pipientis wMel, this protein is Probable GTP-binding protein EngB.